The sequence spans 123 residues: MARIAGVDLPREKRVEIGLTYIFGIGRTLSNEILRKTGINPDTRVKDLTDEEISKLREVIDKEYKVEGDLRREIALNIKRLMEIGCYRGRRHRAGLPVRGQRTKTNARTRKGPKKTVGVQRKK.

The interval 94-123 (AGLPVRGQRTKTNARTRKGPKKTVGVQRKK) is disordered. Basic residues predominate over residues 101-123 (QRTKTNARTRKGPKKTVGVQRKK).

Belongs to the universal ribosomal protein uS13 family. As to quaternary structure, part of the 30S ribosomal subunit. Forms a loose heterodimer with protein S19. Forms two bridges to the 50S subunit in the 70S ribosome.

In terms of biological role, located at the top of the head of the 30S subunit, it contacts several helices of the 16S rRNA. In the 70S ribosome it contacts the 23S rRNA (bridge B1a) and protein L5 of the 50S subunit (bridge B1b), connecting the 2 subunits; these bridges are implicated in subunit movement. Contacts the tRNAs in the A and P-sites. This Acetivibrio thermocellus (strain ATCC 27405 / DSM 1237 / JCM 9322 / NBRC 103400 / NCIMB 10682 / NRRL B-4536 / VPI 7372) (Clostridium thermocellum) protein is Small ribosomal subunit protein uS13.